Here is a 260-residue protein sequence, read N- to C-terminus: MKTSDYLKKYGIRLKKHLGQVFLSDDRIAKRIVKEADLKPDDVVVEIGAGAGTLTEELAKTGARVIAYEIDEGLAPILQERLSKYPNVELRFEDFLKARDVPEEAICVSNIPYSVTGPIMEKIIEWRFKKAIVMVQKEVGERILSKPGRKSYGYLSVVVQTFYEVRKLFDVSRSYFVPNPEVDSVVVEMKRKAVEIDFPQFKKFVSMIFSKKRKTLKNNLRPFLSVFEGVDLSRRAEQLSIEEIIELYNIWRRALECSEE.

The S-adenosyl-L-methionine site is built by leucine 23, glycine 48, glutamate 69, aspartate 94, and asparagine 110.

The protein belongs to the class I-like SAM-binding methyltransferase superfamily. rRNA adenine N(6)-methyltransferase family. RsmA subfamily.

It is found in the cytoplasm. The enzyme catalyses adenosine(1518)/adenosine(1519) in 16S rRNA + 4 S-adenosyl-L-methionine = N(6)-dimethyladenosine(1518)/N(6)-dimethyladenosine(1519) in 16S rRNA + 4 S-adenosyl-L-homocysteine + 4 H(+). Functionally, specifically dimethylates two adjacent adenosines (A1518 and A1519) in the loop of a conserved hairpin near the 3'-end of 16S rRNA in the 30S particle. May play a critical role in biogenesis of 30S subunits. The chain is Ribosomal RNA small subunit methyltransferase A from Thermotoga neapolitana (strain ATCC 49049 / DSM 4359 / NBRC 107923 / NS-E).